A 471-amino-acid polypeptide reads, in one-letter code: MKHLNTVMAESPALITIFLLGYLLSTECAVFLDRENATKILTRPKRYNSGKLEEFVRGNLERECIEERCSFEEAREVFENTEKTTEFWKQYVDGDQCESNPCLNGGICKDDISSYECWCQVGFEGRNCELDATCNIKNGRCKQFCKNSPDNKVICSCTEGYQLAEDQKSCEPTVPFPCGRASISYSSKKITRAETVFSNMDYENSTEAVFIQDDITDGAILNNVTESSESLNDFTRVVGGENAKPGQIPWQVILNGEIEAFCGGAIINEKWIVTAAHCLKPGDKIEVVAGEYNIDKKEDTEQRRNVIRTIPHHQYNATINKYSHDIALLELDKPLILNSYVTPICVANREYTNIFLKFGSGYVSGWGKVFNKGRQASILQYLRVPLVDRATCLRSTTFTIYNNMFCAGYREGGKDSCEGDSGGPHVTEVEGTSFLTGIISWGEECAMKGKYGIYTKVSRYVNWIKEKTKLT.

The signal sequence occupies residues 1–28; the sequence is MKHLNTVMAESPALITIFLLGYLLSTEC. A propeptide spanning residues 29–46 is cleaved from the precursor; it reads AVFLDRENATKILTRPKR. Residues Y47, N48, E53, E54, E61, E63, E66, E67, E72, E73, and E76 each coordinate Ca(2+). Positions 47–92 constitute a Gla domain; the sequence is YNSGKLEEFVRGNLERECIEERCSFEEAREVFENTEKTTEFWKQYV. 4-carboxyglutamate occurs at positions 53, 54, 61, 63, 66, 67, 72, 73, 76, 79, and 82. E61 provides a ligand contact to Mg(2+). A disulfide bridge links C64 with C69. E66 is a binding site for Mg(2+). E72 is a Mg(2+) binding site. A Mg(2+)-binding site is contributed by E76. E82 serves as a coordination point for Ca(2+). E82 is a binding site for Mg(2+). An O-linked (GalNAc...) threonine glycan is attached at T85. Positions 86, 93, 94, and 96 each coordinate Ca(2+). Position 86 is a 4-carboxyglutamate (E86). E86 lines the Mg(2+) pocket. The region spanning 93–129 is the EGF-like 1; calcium-binding domain; it reads DGDQCESNPCLNGGICKDDISSYECWCQVGFEGRNCE. Cystine bridges form between C97-C108, C102-C117, C119-C128, C134-C145, C141-C155, C157-C170, C178-C345, C262-C278, C392-C406, and C417-C445. S99 is a glycosylation site (O-linked (Glc...) serine). Ca(2+) is bound by residues D110 and D111. (3R)-3-hydroxyaspartate is present on D110. Phosphoserine is present on S114. Residues 130 to 171 enclose the EGF-like 2 domain; the sequence is LDATCNIKNGRCKQFCKNSPDNKVICSCTEGYQLAEDQKSCE. Positions 193 to 236 are cleaved as a propeptide — activation peptide; it reads AETVFSNMDYENSTEAVFIQDDITDGAILNNVTESSESLNDFTR. At Y202 the chain carries Sulfotyrosine. N204 is a glycosylation site (N-linked (GlcNAc...) asparagine). Phosphoserine is present on S205. Position 206 is a phosphothreonine; alternate (T206). T206 carries O-linked (GalNAc...) threonine; alternate glycosylation. Residue N223 is glycosylated (N-linked (GlcNAc...) asparagine). O-linked (GalNAc...) threonine glycosylation is found at T225 and T235. The 233-residue stretch at 237 to 469 folds into the Peptidase S1 domain; sequence VVGGENAKPG…YVNWIKEKTK (233 aa). H277 acts as the Charge relay system in catalysis. Positions 291, 293, 298, and 301 each coordinate Ca(2+). The active-site Charge relay system is D325. The active-site Charge relay system is the S421.

Belongs to the peptidase S1 family. Heterodimer of a light chain and a heavy chain; disulfide-linked. Interacts (inactive and activated) with F11 (activated) in calcium-dependent manner. Interacts with SERPINC1. Activated by factor XIa, which excises the activation peptide. The propeptide can also be removed by snake venom protease. Activated by coagulation factor VIIa-tissue factor (F7-F3) complex in calcium-dependent manner. In terms of processing, the iron and 2-oxoglutarate dependent 3-hydroxylation of aspartate and asparagine is (R) stereospecific within EGF domains. Post-translationally, predominantly O-glucosylated at Ser-99 by POGLUT1 in vitro. In terms of tissue distribution, detected in liver.

Its subcellular location is the secreted. It carries out the reaction Selective cleavage of Arg-|-Ile bond in factor X to form factor Xa.. In terms of biological role, factor IX is a vitamin K-dependent plasma protein that participates in the intrinsic pathway of blood coagulation by converting factor X to its active form in the presence of Ca(2+) ions, phospholipids, and factor VIIIa. This chain is Coagulation factor IX (F9), found in Mus musculus (Mouse).